A 203-amino-acid polypeptide reads, in one-letter code: Endothelin-1 (203 aa).

Residues 1–25 (MDYFPMIIALLFVAFQGAPETAVLG) form the signal peptide. Residues 26 to 50 (AELSPEAESQGETPSPHASWRPRRS) constitute a propeptide that is removed on maturation. The disordered stretch occupies residues 27–48 (ELSPEAESQGETPSPHASWRPR). Disulfide bonds link C53–C67 and C55–C63. Residues 83-203 (YGLGSPSRSR…DKKVTHNRTH (121 aa)) constitute a propeptide that is removed on maturation. The segment at 110–124 (CQCASQKDKKCWSFC) is endothelin-like. Residue N200 is glycosylated (N-linked (GlcNAc...) asparagine).

The protein belongs to the endothelin/sarafotoxin family.

The protein resides in the secreted. In terms of biological role, endothelins are endothelium-derived vasoconstrictor peptides. Probable ligand for G-protein coupled receptors EDNRA and EDNRB which activates PTK2B, BCAR1, BCAR3 and, GTPases RAP1 and RHOA cascade in glomerular mesangial cells. Also binds the DEAR/FBXW7-AS1 receptor. Promotes mesenteric arterial wall remodeling via activation of ROCK signaling and subsequent colocalization of NFATC3 with F-actin filaments. NFATC3 then translocates to the nucleus where it subsequently promotes the transcription of the smooth muscle hypertrophy and differentiation marker ACTA2. The protein is Endothelin-1 (EDN1) of Sus scrofa (Pig).